The chain runs to 273 residues: 4-hydroxy-tetrahydrodipicolinate reductase (273 aa).

Residues 8 to 13, glutamate 34, 102 to 104, and 128 to 131 each bind NAD(+); these read GACGRM, GTT, and APNM. The active-site Proton donor/acceptor is the histidine 160. Histidine 161 provides a ligand contact to (S)-2,3,4,5-tetrahydrodipicolinate. Lysine 164 functions as the Proton donor in the catalytic mechanism. 170 to 171 is a binding site for (S)-2,3,4,5-tetrahydrodipicolinate; it reads GT.

The protein belongs to the DapB family.

It localises to the cytoplasm. The enzyme catalyses (S)-2,3,4,5-tetrahydrodipicolinate + NAD(+) + H2O = (2S,4S)-4-hydroxy-2,3,4,5-tetrahydrodipicolinate + NADH + H(+). It catalyses the reaction (S)-2,3,4,5-tetrahydrodipicolinate + NADP(+) + H2O = (2S,4S)-4-hydroxy-2,3,4,5-tetrahydrodipicolinate + NADPH + H(+). It participates in amino-acid biosynthesis; L-lysine biosynthesis via DAP pathway; (S)-tetrahydrodipicolinate from L-aspartate: step 4/4. Its function is as follows. Catalyzes the conversion of 4-hydroxy-tetrahydrodipicolinate (HTPA) to tetrahydrodipicolinate. The sequence is that of 4-hydroxy-tetrahydrodipicolinate reductase from Methanothermobacter thermautotrophicus (strain ATCC 29096 / DSM 1053 / JCM 10044 / NBRC 100330 / Delta H) (Methanobacterium thermoautotrophicum).